The following is a 487-amino-acid chain: N-succinylglutamate 5-semialdehyde dehydrogenase (487 aa).

The disordered stretch occupies residues 1–23; it reads MTHFIKGQWHTGKGHDVASSNPA. Residue 220–225 coordinates NAD(+); sequence GSSRTG. Active-site residues include Glu243 and Cys277.

It belongs to the aldehyde dehydrogenase family. AstD subfamily.

It catalyses the reaction N-succinyl-L-glutamate 5-semialdehyde + NAD(+) + H2O = N-succinyl-L-glutamate + NADH + 2 H(+). It participates in amino-acid degradation; L-arginine degradation via AST pathway; L-glutamate and succinate from L-arginine: step 4/5. Its function is as follows. Catalyzes the NAD-dependent reduction of succinylglutamate semialdehyde into succinylglutamate. The sequence is that of N-succinylglutamate 5-semialdehyde dehydrogenase from Shewanella oneidensis (strain ATCC 700550 / JCM 31522 / CIP 106686 / LMG 19005 / NCIMB 14063 / MR-1).